A 384-amino-acid polypeptide reads, in one-letter code: tRNA-specific 2-thiouridylase MnmA (384 aa).

ATP-binding positions include 29–36 (AMSGGVDS) and Leu55. Cys123 serves as the catalytic Nucleophile. Cys123 and Cys220 form a disulfide bridge. Gly147 is an ATP binding site. Residues 169 to 171 (RDQ) form an interaction with tRNA region. The Cysteine persulfide intermediate role is filled by Cys220.

It belongs to the MnmA/TRMU family.

The protein resides in the cytoplasm. It carries out the reaction S-sulfanyl-L-cysteinyl-[protein] + uridine(34) in tRNA + AH2 + ATP = 2-thiouridine(34) in tRNA + L-cysteinyl-[protein] + A + AMP + diphosphate + H(+). Its function is as follows. Catalyzes the 2-thiolation of uridine at the wobble position (U34) of tRNA, leading to the formation of s(2)U34. In Dinoroseobacter shibae (strain DSM 16493 / NCIMB 14021 / DFL 12), this protein is tRNA-specific 2-thiouridylase MnmA.